The primary structure comprises 93 residues: Integration host factor subunit beta (93 aa).

It belongs to the bacterial histone-like protein family. In terms of assembly, heterodimer of an alpha and a beta chain.

Functionally, this protein is one of the two subunits of integration host factor, a specific DNA-binding protein that functions in genetic recombination as well as in transcriptional and translational control. The polypeptide is Integration host factor subunit beta (Vibrio vulnificus (strain YJ016)).